Here is a 298-residue protein sequence, read N- to C-terminus: Cyanophycinase (298 aa).

Catalysis depends on charge relay system residues Ser155, Glu173, and His197.

Belongs to the peptidase S51 family.

It carries out the reaction [L-4-(L-arginin-2-N-yl)aspartate](n) + H2O = [L-4-(L-arginin-2-N-yl)aspartate](n-1) + L-4-(L-arginin-2-N-yl)aspartate. Exopeptidase that catalyzes the hydrolytic cleavage of multi-L-arginyl-poly-L-aspartic acid (cyanophycin; a water-insoluble reserve polymer) into aspartate-arginine dipeptides. In Nostoc sp. (strain PCC 7120 / SAG 25.82 / UTEX 2576), this protein is Cyanophycinase (cphB).